The sequence spans 339 residues: MEITLFDPIDAHLHVRENALLKAVLGYSSEPFSAAVIMPNLSKPLIDTPTTLEYEEEILNHSSNFKPLMSLYFNDGLTLEELQCAKEKGVRFLKLYPKGMTTNAQNGTSDLLGEKTLEVLENAQKLGFILCIHAEQTGFCLDKEFLCHSVLETFALSFPKLKIIIEHLSDWRSIALIEKHDNLYATLTLHHISMTLDDLLGGSLNPHCFCKPLIKTKKDQERLLSLALKAHPKISFGSDSAPHFISKKHSANIPAGIFSAPILLPALCELFEKHNALENLQAFISDNAKTIYGLENLPSKKARLSKKPFMIPTHTLCLNEKIAILRGGETLSWNLQEIA.

The Zn(2+) site is built by His-12 and His-14. Substrate is bound by residues 14–16 (HVR) and Asn-40. Residues Lys-94, His-133, His-167, and Asp-239 each contribute to the Zn(2+) site. Lys-94 carries the N6-carboxylysine modification. His-133 lines the substrate pocket. Asp-239 is an active-site residue. Substrate is bound by residues His-243 and Ala-255.

It belongs to the metallo-dependent hydrolases superfamily. DHOase family. Class II DHOase subfamily. Homodimer. Zn(2+) serves as cofactor.

It catalyses the reaction (S)-dihydroorotate + H2O = N-carbamoyl-L-aspartate + H(+). It functions in the pathway pyrimidine metabolism; UMP biosynthesis via de novo pathway; (S)-dihydroorotate from bicarbonate: step 3/3. Catalyzes the reversible cyclization of carbamoyl aspartate to dihydroorotate. The polypeptide is Dihydroorotase (Helicobacter pylori (strain ATCC 700392 / 26695) (Campylobacter pylori)).